The primary structure comprises 177 residues: MAEFATIARPYAKALFGLAQEKNQIESWLGGLEKLAAVVQEGKVASLIDRPETNASEKADILIDLVGLKDKELKNFVIVLAGQKRLSILPEVYAQYQDLTLSFNHIKSAVIYSAYPLTDKQVGELVQMLNKRFDSELKISVEIEPELIGGIKVEVGDQVLDLSVQGKLSALYTTMTN.

Belongs to the ATPase delta chain family. As to quaternary structure, F-type ATPases have 2 components, F(1) - the catalytic core - and F(0) - the membrane proton channel. F(1) has five subunits: alpha(3), beta(3), gamma(1), delta(1), epsilon(1). F(0) has three main subunits: a(1), b(2) and c(10-14). The alpha and beta chains form an alternating ring which encloses part of the gamma chain. F(1) is attached to F(0) by a central stalk formed by the gamma and epsilon chains, while a peripheral stalk is formed by the delta and b chains.

It is found in the cell inner membrane. F(1)F(0) ATP synthase produces ATP from ADP in the presence of a proton or sodium gradient. F-type ATPases consist of two structural domains, F(1) containing the extramembraneous catalytic core and F(0) containing the membrane proton channel, linked together by a central stalk and a peripheral stalk. During catalysis, ATP synthesis in the catalytic domain of F(1) is coupled via a rotary mechanism of the central stalk subunits to proton translocation. Its function is as follows. This protein is part of the stalk that links CF(0) to CF(1). It either transmits conformational changes from CF(0) to CF(1) or is implicated in proton conduction. This is ATP synthase subunit delta from Neisseria meningitidis serogroup B (strain ATCC BAA-335 / MC58).